We begin with the raw amino-acid sequence, 883 residues long: DNA mismatch repair protein MutS (883 aa).

Position 602–609 (602–609 (GPNMSGKS)) interacts with ATP.

It belongs to the DNA mismatch repair MutS family.

Functionally, this protein is involved in the repair of mismatches in DNA. It is possible that it carries out the mismatch recognition step. This protein has a weak ATPase activity. This is DNA mismatch repair protein MutS from Staphylococcus haemolyticus (strain JCSC1435).